The following is a 153-amino-acid chain: Putative ubiquitin-conjugating enzyme E2 N-like (153 aa).

The UBC core domain maps to 3-150; that stretch reads ELPHRIIKET…ARAWTRLYAM (148 aa). Lys83 carries the N6-acetyllysine modification.

It belongs to the ubiquitin-conjugating enzyme family. In terms of tissue distribution, expressed in epididymis (at protein level).

The protein is Putative ubiquitin-conjugating enzyme E2 N-like (UBE2NL) of Homo sapiens (Human).